The chain runs to 1313 residues: Inactive protein tyrosine kinase pTKL (1313 aa).

MORN repeat units lie at residues 20-42 (YAGD…ENGN) and 45-63 (FGHF…IDKN). 7 N-linked (GlcNAc...) asparagine glycosylation sites follow: asparagine 63, asparagine 131, asparagine 178, asparagine 208, asparagine 254, asparagine 260, and asparagine 288. Residues 300 to 365 (WNKEQVAQWL…LQLIKNLRVT (66 aa)) form the SAM domain. Asparagine 466, asparagine 516, asparagine 525, asparagine 528, and asparagine 534 each carry an N-linked (GlcNAc...) asparagine glycan. A compositionally biased stretch (basic and acidic residues) spans 569 to 580 (EPIKPNKEKEEN). Residues 569–631 (EPIKPNKEKE…SEKSSETSSE (63 aa)) are disordered. Positions 586–604 (PIINSKNETNLLNDSNPTK) are enriched in polar residues. Asparagine 592, asparagine 598, asparagine 661, asparagine 678, asparagine 729, asparagine 735, and asparagine 749 each carry an N-linked (GlcNAc...) asparagine glycan. Lysine 782 is a binding site for ATP. N-linked (GlcNAc...) asparagine glycans are attached at residues asparagine 790, asparagine 868, asparagine 940, asparagine 983, and asparagine 1000. Residues 962 to 1294 (FRNKNNILCG…FDRILIEISM (333 aa)) form the Protein kinase domain. Residues 1052 to 1055 (KILF) carry the RVxF motif motif. N-linked (GlcNAc...) asparagine glycans are attached at residues asparagine 1191 and asparagine 1198.

It belongs to the protein kinase superfamily. TKL Ser/Thr protein kinase family.

The protein localises to the parasitophorous vacuole. The protein resides in the host cell membrane. It is found in the host cytoplasm. It localises to the host cytoskeleton. In Plasmodium berghei (strain Anka), this protein is Inactive protein tyrosine kinase pTKL.